We begin with the raw amino-acid sequence, 1501 residues long: Inactive protein tyrosine kinase pTKL (1501 aa).

Asn-64, Asn-128, and Asn-133 each carry an N-linked (GlcNAc...) asparagine glycan. A compositionally biased stretch (basic residues) spans 204-221 (KKNKKNKKNKKKKNKKTK). The tract at residues 204–223 (KKNKKNKKNKKKKNKKTKNT) is disordered. 4 N-linked (GlcNAc...) asparagine glycosylation sites follow: Asn-239, Asn-242, Asn-258, and Asn-327. Residues 257–273 (MNISLHEKNDKKNEKKN) show a composition bias toward basic and acidic residues. The segment at 257–276 (MNISLHEKNDKKNEKKNEKK) is disordered. Residues 301 to 366 (WSLREVIQWL…LQLIKNLQVM (66 aa)) form the SAM domain. A disordered region spans residues 392-425 (NKNIKKGKNIKKEKKKKKEKNIKKEKKKKKKETK). Over residues 394–424 (NIKKGKNIKKEKKKKKEKNIKKEKKKKKKET) the composition is skewed to basic residues. Positions 399-433 (KNIKKEKKKKKEKNIKKEKKKKKKETKKFNNMDKK) form a coiled coil. Asn-448, Asn-463, and Asn-471 each carry an N-linked (GlcNAc...) asparagine glycan. Positions 483 to 486 (KVSF) match the RVxF motif 1 motif. Residue Asn-506 is glycosylated (N-linked (GlcNAc...) asparagine). Low complexity predominate over residues 543–597 (QLSSPLSSPLSSPSPSSSPSSSPSSSPSSSPSSSPSPSSSPSPSSSPSSSPSSSP). Positions 543–607 (QLSSPLSSPL…SSPPSPLSYK (65 aa)) are disordered. The N-linked (GlcNAc...) asparagine glycan is linked to Asn-652. The tract at residues 659–678 (IKKSKSKYNNDKKEQKKLPL) is disordered. Residues 666–675 (YNNDKKEQKK) show a composition bias toward basic and acidic residues. Residues Asn-681, Asn-712, Asn-737, Asn-811, and Asn-819 are each glycosylated (N-linked (GlcNAc...) asparagine). ATP contacts are provided by residues 836 to 844 (QNINNFGKY) and Lys-864. 4 N-linked (GlcNAc...) asparagine glycosylation sites follow: Asn-1024, Asn-1031, Asn-1074, and Asn-1157. The Protein kinase domain occupies 1088-1483 (FHYQHNVLCG…HILKTISTLY (396 aa)). The short motif at 1238–1241 (KVLF) is the RVxF motif 2 element. Asn-1382 carries N-linked (GlcNAc...) asparagine glycosylation.

It belongs to the protein kinase superfamily. TKL Ser/Thr protein kinase family. As to quaternary structure, interacts (via RVxF motif 1 and/or 2) with phosphatase PP1C. May interact (via SAM domain) with SERA5 (via C-terminus).

It localises to the parasitophorous vacuole. It is found in the host cell membrane. Its subcellular location is the host cytoplasm. The protein localises to the host cytoskeleton. In Plasmodium falciparum (isolate 3D7), this protein is Inactive protein tyrosine kinase pTKL.